The chain runs to 237 residues: Concanavalin-Br (237 aa).

Residues Glu-8 and Asp-10 each contribute to the Mn(2+) site. Ca(2+) contacts are provided by Asp-10, Tyr-12, Asn-14, and Asp-19. Position 12 (Tyr-12) interacts with a carbohydrate. Mn(2+)-binding residues include Asp-19, His-24, and Ser-34. 99–100 (LY) contributes to the a carbohydrate binding site. Asp-208 contributes to the Ca(2+) binding site. Arg-228 lines the a carbohydrate pocket.

It belongs to the leguminous lectin family. As to quaternary structure, homotetramer.

Glucose/D-mannose specific lectin. Has anti-inflammatory activity in rats. Induces histamine release in mast cells from hamster and rat. Induces lymphocyte proliferation and IFNG production. Shows toxicity against the aquatic snail B.glabrata at concentrations higher than 20 ug/ml. In Canavalia brasiliensis (Brazilian jack bean), this protein is Concanavalin-Br.